The following is a 146-amino-acid chain: 3-dehydroquinate dehydratase (146 aa).

Catalysis depends on Tyr24, which acts as the Proton acceptor. Substrate contacts are provided by Asn73, His79, and Asp86. The active-site Proton donor is the His99. Substrate-binding positions include 100–101 (LS) and Arg110.

The protein belongs to the type-II 3-dehydroquinase family. In terms of assembly, homododecamer.

It carries out the reaction 3-dehydroquinate = 3-dehydroshikimate + H2O. It participates in metabolic intermediate biosynthesis; chorismate biosynthesis; chorismate from D-erythrose 4-phosphate and phosphoenolpyruvate: step 3/7. Its function is as follows. Catalyzes a trans-dehydration via an enolate intermediate. This is 3-dehydroquinate dehydratase from Shewanella baltica (strain OS223).